The chain runs to 407 residues: uncharacterized protein (407 aa).

The N-terminal stretch at 1–27 (MRILAMTRAHNAGRTLAATLDSLAVFS) is a signal peptide.

This is an uncharacterized protein from Mycobacterium bovis (strain ATCC BAA-935 / AF2122/97).